A 307-amino-acid polypeptide reads, in one-letter code: Ribosomal protein L11 methyltransferase (307 aa).

S-adenosyl-L-methionine-binding residues include Thr144, Gly165, Asp187, and Asn235.

It belongs to the methyltransferase superfamily. PrmA family.

It localises to the cytoplasm. The catalysed reaction is L-lysyl-[protein] + 3 S-adenosyl-L-methionine = N(6),N(6),N(6)-trimethyl-L-lysyl-[protein] + 3 S-adenosyl-L-homocysteine + 3 H(+). Functionally, methylates ribosomal protein L11. This Psychrobacter sp. (strain PRwf-1) protein is Ribosomal protein L11 methyltransferase.